Consider the following 339-residue polypeptide: DNA-directed RNA polymerase subunit alpha (339 aa).

The alpha N-terminal domain (alpha-NTD) stretch occupies residues Met1 to Glu233. The segment at Lys264–Phe339 is alpha C-terminal domain (alpha-CTD).

This sequence belongs to the RNA polymerase alpha chain family. In plastids the minimal PEP RNA polymerase catalytic core is composed of four subunits: alpha, beta, beta', and beta''. When a (nuclear-encoded) sigma factor is associated with the core the holoenzyme is formed, which can initiate transcription.

Its subcellular location is the plastid. It is found in the chloroplast. It carries out the reaction RNA(n) + a ribonucleoside 5'-triphosphate = RNA(n+1) + diphosphate. Functionally, DNA-dependent RNA polymerase catalyzes the transcription of DNA into RNA using the four ribonucleoside triphosphates as substrates. The chain is DNA-directed RNA polymerase subunit alpha from Psathyrostachys fragilis (Russian wild rye).